Reading from the N-terminus, the 553-residue chain is Dihydrolipoyllysine-residue acetyltransferase component of pyruvate dehydrogenase complex (553 aa).

The 75-residue stretch at 4-78 (AIEIKVPDIG…SEGSVLVMLE (75 aa)) folds into the Lipoyl-binding 1 domain. Lysine 44 is modified (N6-lipoyllysine). Residues 97–118 (AAAAPAPAPAPAAAPAAAPAAG) are disordered. Residues 122 to 196 (TIEVKVPDIG…AEGTLLLILE (75 aa)) enclose the Lipoyl-binding 2 domain. Lysine 162 is subject to N6-lipoyllysine. In terms of domain architecture, Peripheral subunit-binding (PSBD) spans 250-287 (HASPSVRKFARELGVDVSRVPGTGPKGRITQEDVQGYV). Histidine 526 is a catalytic residue.

It belongs to the 2-oxoacid dehydrogenase family. In terms of assembly, forms a 24-polypeptide structural core with octahedral symmetry. It depends on (R)-lipoate as a cofactor.

It catalyses the reaction N(6)-[(R)-dihydrolipoyl]-L-lysyl-[protein] + acetyl-CoA = N(6)-[(R)-S(8)-acetyldihydrolipoyl]-L-lysyl-[protein] + CoA. The pyruvate dehydrogenase complex catalyzes the overall conversion of pyruvate to acetyl-CoA and CO(2). It contains multiple copies of three enzymatic components: pyruvate dehydrogenase (E1), dihydrolipoamide acetyltransferase (E2) and lipoamide dehydrogenase (E3). The protein is Dihydrolipoyllysine-residue acetyltransferase component of pyruvate dehydrogenase complex (pdhB) of Cupriavidus necator (strain ATCC 17699 / DSM 428 / KCTC 22496 / NCIMB 10442 / H16 / Stanier 337) (Ralstonia eutropha).